The following is a 492-amino-acid chain: Cytochrome P450 26A1 (492 aa).

C438 serves as a coordination point for heme.

It belongs to the cytochrome P450 family. Heme is required as a cofactor.

It localises to the endoplasmic reticulum membrane. Its subcellular location is the microsome membrane. It carries out the reaction all-trans-retinoate + reduced [NADPH--hemoprotein reductase] + O2 = all-trans-(4S)-hydroxyretinoate + oxidized [NADPH--hemoprotein reductase] + H2O + H(+). In terms of biological role, a cytochrome P450 monooxygenase involved in the metabolism of all-trans retinoic acid (atRA), a signaling molecule that binds to retinoic acid receptors and regulates gene transcription. Mechanistically, uses molecular oxygen inserting one oxygen atom into a substrate, and reducing the second into a water molecule, with two electrons provided by NADPH via cytochrome P450 reductase (CPR; NADPH-ferrihemoprotein reductase). Catalyzes the hydroxylation of carbon hydrogen bonds of atRA primarily at C-4. Has no activity toward 9-cis and 13-cis retinoic acid stereoisomers. May play a role in the oxidative metabolism of xenobiotics such as tazarotenic acid. The sequence is that of Cytochrome P450 26A1 (cyp26a1) from Danio rerio (Zebrafish).